Here is a 328-residue protein sequence, read N- to C-terminus: DNA-directed RNA polymerase subunit alpha (328 aa).

An alpha N-terminal domain (alpha-NTD) region spans residues methionine 1–glutamate 231. The tract at residues phenylalanine 248–arginine 328 is alpha C-terminal domain (alpha-CTD).

It belongs to the RNA polymerase alpha chain family. Homodimer. The RNAP catalytic core consists of 2 alpha, 1 beta, 1 beta' and 1 omega subunit. When a sigma factor is associated with the core the holoenzyme is formed, which can initiate transcription.

The catalysed reaction is RNA(n) + a ribonucleoside 5'-triphosphate = RNA(n+1) + diphosphate. Functionally, DNA-dependent RNA polymerase catalyzes the transcription of DNA into RNA using the four ribonucleoside triphosphates as substrates. The protein is DNA-directed RNA polymerase subunit alpha of Leptothrix cholodnii (strain ATCC 51168 / LMG 8142 / SP-6) (Leptothrix discophora (strain SP-6)).